Consider the following 547-residue polypeptide: Chaperonin GroEL 1 (547 aa).

ATP is bound by residues 30–33, lysine 51, 87–91, glycine 415, and aspartate 496; these read TLGP and DGTTT.

It belongs to the chaperonin (HSP60) family. As to quaternary structure, forms a cylinder of 14 subunits composed of two heptameric rings stacked back-to-back. Interacts with the co-chaperonin GroES.

The protein localises to the cytoplasm. The enzyme catalyses ATP + H2O + a folded polypeptide = ADP + phosphate + an unfolded polypeptide.. Functionally, together with its co-chaperonin GroES, plays an essential role in assisting protein folding. The GroEL-GroES system forms a nano-cage that allows encapsulation of the non-native substrate proteins and provides a physical environment optimized to promote and accelerate protein folding. In Rhodopseudomonas palustris (strain BisB18), this protein is Chaperonin GroEL 1.